The following is a 225-amino-acid chain: Small ribosomal subunit protein uS3 (225 aa).

The KH type-2 domain occupies 39–109 (IYRFFNKFTR…ELKLNIEVVN (71 aa)).

The protein belongs to the universal ribosomal protein uS3 family. As to quaternary structure, part of the 30S ribosomal subunit. Forms a tight complex with proteins S10 and S14.

Binds the lower part of the 30S subunit head. Binds mRNA in the 70S ribosome, positioning it for translation. This Mycoplasma mobile (strain ATCC 43663 / 163K / NCTC 11711) (Mesomycoplasma mobile) protein is Small ribosomal subunit protein uS3.